The primary structure comprises 803 residues: Ribonuclease II, chloroplastic/mitochondrial (803 aa).

Residues 1–35 constitute a chloroplast and mitochondrion transit peptide; the sequence is MMSVRAINGCSIIRTATSAGGPPVSLFRHRIQRLR. Residues 399 to 694 form the RNB domain; the sequence is RIDLTHLKVY…AHYQIKAFLR (296 aa).

The protein belongs to the RNR ribonuclease family. Expressed in seedlings, roots, leaves and flowers.

The protein resides in the mitochondrion. It localises to the plastid. The protein localises to the chloroplast. The enzyme catalyses Exonucleolytic cleavage in the 3'- to 5'-direction to yield nucleoside 5'-phosphates.. 3'-5' exoribonuclease that catalyzes 3' maturation of chloroplast and mitochondrion ribosomal RNAs; degrades short nucleotidic extensions to generate the mature 3'-ends. Involved in the maturation of 23S, 16S and 5S rRNAs. This Arabidopsis thaliana (Mouse-ear cress) protein is Ribonuclease II, chloroplastic/mitochondrial (RNR1).